A 136-amino-acid polypeptide reads, in one-letter code: Large ribosomal subunit protein uL16c (136 aa).

This sequence belongs to the universal ribosomal protein uL16 family. As to quaternary structure, part of the 50S ribosomal subunit.

It localises to the plastid. It is found in the chloroplast. The polypeptide is Large ribosomal subunit protein uL16c (Chlamydomonas sp. (strain WXM)).